Reading from the N-terminus, the 313-residue chain is Foldase protein PrsA (313 aa).

Positions 1 to 20 (MKKKLLAGAITLLSVATLAA) are cleaved as a signal peptide. Cys-21 carries N-palmitoyl cysteine lipidation. Residue Cys-21 is the site of S-diacylglycerol cysteine attachment. Positions 143 to 241 (TPDVTAQIIR…SQYYIVKLTK (99 aa)) constitute a PpiC domain.

It belongs to the PrsA family.

The protein localises to the cell membrane. The enzyme catalyses [protein]-peptidylproline (omega=180) = [protein]-peptidylproline (omega=0). In terms of biological role, plays a major role in protein secretion by helping the post-translocational extracellular folding of several secreted proteins. This is Foldase protein PrsA from Streptococcus pneumoniae (strain ATCC BAA-255 / R6).